A 298-amino-acid chain; its full sequence is MKKWLIALAGVLLTFTLAGCGSKTVASTSGGKITESQYYSSMKGTSSGKQVLQQMILNKVLEKDYGSKVSTKQVTKQYNTYKSQYGSSFSTVLSQNGLTTKTFKEQLRSNLLLKEAVKDKVKITDKALKKQWKSYEPKVTVQHILVAKSATADKVLDALKKDSSQANFTKLAKKYSTDTTTKNDGGKLSAFDNTNTSYSSKFLTAAFKLKNGEYTTSAVKTSNGYEIIRMIKNPGKGKMSDHTADLKKQIWDNDMSDSTVLQNVVSKVLKGGNVSIKDNDLKDILSSYLSTSSSSSSN.

Positions 1-19 are cleaved as a signal peptide; that stretch reads MKKWLIALAGVLLTFTLAG. Cysteine 20 carries N-palmitoyl cysteine lipidation. Cysteine 20 carries S-diacylglycerol cysteine lipidation. The region spanning 136–232 is the PpiC domain; that stretch reads EPKVTVQHIL…NGYEIIRMIK (97 aa).

It belongs to the PrsA family.

The protein localises to the cell membrane. The enzyme catalyses [protein]-peptidylproline (omega=180) = [protein]-peptidylproline (omega=0). Functionally, plays a major role in protein secretion by helping the post-translocational extracellular folding of several secreted proteins. The sequence is that of Foldase protein PrsA 1 (prsA1) from Lactiplantibacillus plantarum (strain ATCC BAA-793 / NCIMB 8826 / WCFS1) (Lactobacillus plantarum).